A 162-amino-acid chain; its full sequence is Phosphopantetheine adenylyltransferase (162 aa).

Position 9 (Ser9) interacts with substrate. ATP is bound by residues Ser9–Phe10 and His17. Substrate is bound by residues Lys41, Leu73, and Lys87. Residues Gly88–Arg90, Glu98, and Cys123–Ser129 contribute to the ATP site.

The protein belongs to the bacterial CoaD family. Homohexamer. Mg(2+) serves as cofactor.

The protein localises to the cytoplasm. It catalyses the reaction (R)-4'-phosphopantetheine + ATP + H(+) = 3'-dephospho-CoA + diphosphate. It functions in the pathway cofactor biosynthesis; coenzyme A biosynthesis; CoA from (R)-pantothenate: step 4/5. Functionally, reversibly transfers an adenylyl group from ATP to 4'-phosphopantetheine, yielding dephospho-CoA (dPCoA) and pyrophosphate. The polypeptide is Phosphopantetheine adenylyltransferase (Natranaerobius thermophilus (strain ATCC BAA-1301 / DSM 18059 / JW/NM-WN-LF)).